A 108-amino-acid polypeptide reads, in one-letter code: Glutaredoxin (108 aa).

The Glutaredoxin domain occupies 3–103 (LAKAKEIVSG…PLLTEAGAIA (101 aa)). A disulfide bond links C23 and C26.

The protein belongs to the glutaredoxin family. CPYC subfamily.

It localises to the cytoplasm. In terms of biological role, has a glutathione-disulfide oxidoreductase activity in the presence of NADPH and glutathione reductase. Reduces low molecular weight disulfides and proteins. This Solanum lycopersicum (Tomato) protein is Glutaredoxin.